The following is a 275-amino-acid chain: Structure-specific endonuclease subunit SLX1 (275 aa).

A GIY-YIG domain is found at arginine 12–alanine 95. Positions histidine 148–proline 161 are enriched in pro residues. Residues histidine 148–glutamine 179 are disordered. The SLX1-type zinc finger occupies cysteine 186–cysteine 238.

It belongs to the SLX1 family. In terms of assembly, forms a heterodimer with SLX4. A divalent metal cation serves as cofactor.

It is found in the nucleus. Its function is as follows. Catalytic subunit of the SLX1-SLX4 structure-specific endonuclease that resolves DNA secondary structures generated during DNA repair and recombination. Has endonuclease activity towards branched DNA substrates, introducing single-strand cuts in duplex DNA close to junctions with ss-DNA. Has a preference for 5'-flap structures, and promotes symmetrical cleavage of static and migrating Holliday junctions (HJs). Resolves HJs by generating two pairs of ligatable, nicked duplex products. The protein is Structure-specific endonuclease subunit SLX1 of Homo sapiens (Human).